We begin with the raw amino-acid sequence, 251 residues long: Octanoyltransferase (251 aa).

The BPL/LPL catalytic domain occupies 29-216 (GVIQDTLLLL…NFGFIFKEQV (188 aa)). Substrate is bound by residues 74 to 81 (RGGDVTFH), 146 to 148 (AIG), and 159 to 161 (GFA). Cys-177 acts as the Acyl-thioester intermediate in catalysis.

It belongs to the LipB family.

The protein localises to the cytoplasm. It catalyses the reaction octanoyl-[ACP] + L-lysyl-[protein] = N(6)-octanoyl-L-lysyl-[protein] + holo-[ACP] + H(+). It functions in the pathway protein modification; protein lipoylation via endogenous pathway; protein N(6)-(lipoyl)lysine from octanoyl-[acyl-carrier-protein]: step 1/2. Catalyzes the transfer of endogenously produced octanoic acid from octanoyl-acyl-carrier-protein onto the lipoyl domains of lipoate-dependent enzymes. Lipoyl-ACP can also act as a substrate although octanoyl-ACP is likely to be the physiological substrate. The protein is Octanoyltransferase of Koribacter versatilis (strain Ellin345).